The following is a 594-amino-acid chain: U3 small nucleolar RNA-associated protein 18 (594 aa).

Disordered regions lie at residues 48–128 (EQEM…WIDS) and 176–200 (KWVDDESDSELDDEEDDEEEGSNNV). 3 stretches are compositionally biased toward acidic residues: residues 49-72 (QEMDVEDQEDEGSESDNSEEDEAQ), 102-128 (TMDVDDEDDSSSDDYSEDSEEAAWIDS), and 180-196 (DESDSELDDEEDDEEEG). Positions 101–190 (DTMDVDDEDD…ESDSELDDEE (90 aa)) are interaction with UTP21. Phosphoserine is present on residues serine 182 and serine 184. 5 WD repeats span residues 246-285 (PSHSAIQSLSFHPSKPLLLTGGYDKTLRIYHIDGKTNHLV), 290-334 (LVGS…LTHS), 463-504 (GTTT…TSST), 513-554 (QLTT…VFSN), and 560-593 (TPLGKVTSVAFSPSGGLLAVGNEQGKVRLWKLNH).

It belongs to the WD repeat UTP18 family. As to quaternary structure, interacts with snoRNA U3. Interacts with MPP10, UTP21 and UTP25. Component of the ribosomal small subunit (SSU) processome composed of at least 40 protein subunits and snoRNA U3.

Its subcellular location is the nucleus. The protein localises to the nucleolus. In terms of biological role, involved in nucleolar processing of pre-18S ribosomal RNA and ribosome assembly. The protein is U3 small nucleolar RNA-associated protein 18 (UTP18) of Saccharomyces cerevisiae (strain ATCC 204508 / S288c) (Baker's yeast).